Reading from the N-terminus, the 258-residue chain is Global transcriptional regulator CodY (258 aa).

Residues 1–156 (MSSLLEKTRQ…SATIIGLEIL (156 aa)) are GAF domain. The segment at residues 204–223 (ASKIADKVGITRSVIVNALR) is a DNA-binding region (H-T-H motif).

Belongs to the CodY family.

It is found in the cytoplasm. DNA-binding global transcriptional regulator which is involved in the adaptive response to starvation and acts by directly or indirectly controlling the expression of numerous genes in response to nutrient availability. During rapid exponential growth, CodY is highly active and represses genes whose products allow adaptation to nutrient depletion. The protein is Global transcriptional regulator CodY of Clostridium tetani (strain Massachusetts / E88).